The following is a 490-amino-acid chain: MSEVTKNSLEKILPQLKCHFTWNLFKEDSVSRDLEDRVCNQIEFLNTEFKATMYNLLAYIKHLDGNNEAALECLRQAEELIQQEHADQAEIRSLVTWGNYAWVYYHLGRLSDAQIYVDKVKQTCKKFSNPYSIEYSELDCEEGWTQLKCGRNERAKVCFEKALEEKPNNPEFSSGLAIAMYHLDNHPEKQFSTDVLKQAIELSPDNQYVKVLLGLKLQKMNKEAEGEQFVEEALEKSPCQTDVLRSAAKFYRRKGDLDKAIELFQRVLESTPNNGYLYHQIGCCYKAKVRQMQNTGESEASGNKEMIEALKQYAMDYSNKALEKGLNPLNAYSDLAEFLETECYQTPFNKEVPDAEKQQSHQRYCNLQKYNGKSEDTAVQHGLEGLSISKKSTDKEEIKDQPQNVSENLLPQNAPNYWYLQGLIHKQNGDLLQAAKCYEKELGRLLRDAPSGIGSIFLSASELEDGSEEMGQGAVSSSPRELLSNSEQLN.

TPR repeat units lie at residues 51 to 84, 94 to 127, 136 to 169, 172 to 206, 207 to 240, 241 to 274, 415 to 448, and 450 to 481; these read ATMY…IQQE, LVTW…CKKF, SELD…KPNN, FSSG…SPDN, QYVK…SPCQ, TDVL…TPNN, PNYW…LLRD, and PSGI…SPRE. Ser-203 and Ser-237 each carry phosphoserine. Residues 467 to 490 form a disordered region; the sequence is SEEMGQGAVSSSPRELLSNSEQLN. Over residues 474–490 the composition is skewed to polar residues; sequence AVSSSPRELLSNSEQLN. A Phosphoserine modification is found at Ser-478.

This sequence belongs to the IFIT family. Component of an interferon-dependent multiprotein complex, at least composed of IFIT1, IFIT2 and IFIT3. Interacts with IFIT1 and IFIT2. Interacts (via N-terminus) with MAVS, TBK1, TRAF6 and RIGI. Interacts with COPS5. As to expression, expression significantly higher in peripheral blood mononuclear cells (PBMCs) and monocytes from systemic lupus erythematosus (SLE) patients than in those from healthy individuals (at protein level). Spleen, lung, leukocytes, lymph nodes, placenta, bone marrow and fetal liver.

It is found in the cytoplasm. Its subcellular location is the mitochondrion. IFN-induced antiviral protein which acts as an inhibitor of cellular as well as viral processes, cell migration, proliferation, signaling, and viral replication. Enhances MAVS-mediated host antiviral responses by serving as an adapter bridging TBK1 to MAVS which leads to the activation of TBK1 and phosphorylation of IRF3 and phosphorylated IRF3 translocates into nucleus to promote antiviral gene transcription. Exhibits an antiproliferative activity via the up-regulation of cell cycle negative regulators CDKN1A/p21 and CDKN1B/p27. Normally, CDKN1B/p27 turnover is regulated by COPS5, which binds CDKN1B/p27 in the nucleus and exports it to the cytoplasm for ubiquitin-dependent degradation. IFIT3 sequesters COPS5 in the cytoplasm, thereby increasing nuclear CDKN1B/p27 protein levels. Up-regulates CDKN1A/p21 by down-regulating MYC, a repressor of CDKN1A/p21. Can negatively regulate the apoptotic effects of IFIT2. This Homo sapiens (Human) protein is Interferon-induced protein with tetratricopeptide repeats 3 (IFIT3).